The primary structure comprises 714 residues: Neutral ceramidase A (714 aa).

Positions 1–23 (MKRSIVFIYSLVILLLSVGFIDA) are cleaved as a signal peptide. N-linked (GlcNAc...) asparagine glycans are attached at residues N218 and N246. S293 (nucleophile) is an active-site residue. N-linked (GlcNAc...) asparagine glycosylation is found at N353, N373, N416, N571, N610, and N700.

This sequence belongs to the neutral ceramidase family.

It is found in the secreted. It carries out the reaction an N-acylsphing-4-enine + H2O = sphing-4-enine + a fatty acid. In terms of biological role, hydrolyzes the sphingolipid ceramide into sphingosine and free fatty acid at an optimal pH of 3.0. Has no activity toward glycosphingolipids, such as GalCer and Galbeta1-3GalNAcbeta1-4(NeuAcalpha2-3)Galbeta1-4Glcbeta1-1'Cer or sphingomyelin. This is Neutral ceramidase A (dcd2A) from Dictyostelium discoideum (Social amoeba).